A 465-amino-acid chain; its full sequence is E3 ubiquitin-protein ligase TRIM38 (465 aa).

An RING-type zinc finger spans residues C16–R63. S70 carries the post-translational modification Phosphoserine. A B box-type zinc finger spans residues D88 to V129. Zn(2+) is bound by residues C93, H96, C115, and H121. In terms of domain architecture, B30.2/SPRY spans C274–D465.

In terms of assembly, interacts (via B30.2/SPRY domain) with TAB2 and TAB3. Ubiquitous.

It is found in the cytoplasm. It catalyses the reaction S-ubiquitinyl-[E2 ubiquitin-conjugating enzyme]-L-cysteine + [acceptor protein]-L-lysine = [E2 ubiquitin-conjugating enzyme]-L-cysteine + N(6)-ubiquitinyl-[acceptor protein]-L-lysine.. The protein operates within protein modification; protein ubiquitination. It participates in protein modification; protein sumoylation. Functionally, E3 ubiquitin-protein and E3 SUMO-protein ligase that acts as a regulator of innate immunity. Acts as a negative regulator of type I interferon IFN-beta production by catalyzing 'Lys-48'-linked polyubiquitination of AZI2/NAP1, leading to its degradation. Mediates 'Lys-48'-linked polyubiquitination and proteasomal degradation of the critical TLR adapter TICAM1, inhibiting TLR3-mediated type I interferon signaling. Acts as positive regulator of the cGAS-STING pathway by acting as a E3 SUMO-protein ligase: mediates sumoylation of CGAS and STING, preventing their degradation and thereby activating the innate immune response to DNA virus. Also acts as a negative regulator of NF-kappa-B signaling independently of its E3 protein ligase activity by promoting lysosome-dependent degradation of TAB2 and TAB3 adapters. This is E3 ubiquitin-protein ligase TRIM38 from Homo sapiens (Human).